A 289-amino-acid chain; its full sequence is Methionyl-tRNA formyltransferase (289 aa).

A (6S)-5,6,7,8-tetrahydrofolate-binding site is contributed by 106 to 109; that stretch reads SLLP.

This sequence belongs to the Fmt family.

It carries out the reaction L-methionyl-tRNA(fMet) + (6R)-10-formyltetrahydrofolate = N-formyl-L-methionyl-tRNA(fMet) + (6S)-5,6,7,8-tetrahydrofolate + H(+). Attaches a formyl group to the free amino group of methionyl-tRNA(fMet). The formyl group appears to play a dual role in the initiator identity of N-formylmethionyl-tRNA by promoting its recognition by IF2 and preventing the misappropriation of this tRNA by the elongation apparatus. The protein is Methionyl-tRNA formyltransferase of Mycoplasmopsis pulmonis (strain UAB CTIP) (Mycoplasma pulmonis).